Here is a 984-residue protein sequence, read N- to C-terminus: Mineralocorticoid receptor (984 aa).

The interval 1–602 is modulating; the sequence is METKGYHSLP…STGSSRPSKI (602 aa). Residues 231 to 243 show a composition bias toward polar residues; that stretch reads QGTPLTCSPNVEN. 2 disordered regions span residues 231–329 and 346–369; these read QGTP…AAST and SGTSAGSSTSRDVVPSPDTQEKGA. Phosphoserine is present on residues S250, S259, S283, S287, and S299. Over residues 259–291 the composition is skewed to low complexity; sequence SPLSSPLSSMKSSISSPPSHCSVKSPVSSPNNV. Positions 292 to 329 are enriched in polar residues; sequence TLRSSVSSPANINNSRCSVSSPSNTNNRSTLSSPAAST. The span at 346–355 shows a compositional bias: low complexity; that stretch reads SGTSAGSSTS. Zn(2+) is bound by residues C603, C606, C620, C623, C639, C645, C655, and C658. 2 consecutive NR C4-type zinc fingers follow at residues 603 to 623 and 639 to 663; these read CLVCGDEASGCHYGVVTCGSC and CAGRNDCIIDKIRRKNCPACRLQKC. Positions 603 to 668 form a DNA-binding region, nuclear receptor; that stretch reads CLVCGDEASG…RLQKCLQAGM (66 aa). Residues 669 to 725 are hinge; it reads NLGARKSKKLGKLKGIHEEQPQQQQPPPPPPPPQSPEEGTTYIAPAKEPSVNTALVP. The segment at 684 to 710 is disordered; that stretch reads IHEEQPQQQQPPPPPPPPQSPEEGTTY. A compositionally biased stretch (pro residues) spans 692 to 703; the sequence is QQPPPPPPPPQS. An NR LBD domain is found at 726-964; it reads QLSTISRALT…EFPAMLVEII (239 aa). Residues N770 and Q776 each coordinate 21-hydroxyprogesterone. N770 and Q776 together coordinate aldosterone. N770 and Q776 together coordinate progesterone. The tract at residues 782–785 is important for coactivator binding; that stretch reads KWAK. Residues R817 and T945 each contribute to the 21-hydroxyprogesterone site. Aldosterone-binding residues include R817 and T945. 2 residues coordinate progesterone: R817 and T945.

Belongs to the nuclear hormone receptor family. NR3 subfamily. As to quaternary structure, heteromultimeric cytoplasmic complex with HSP90, HSP70, and FKBP4, in the absence of ligand. After ligand binding, it translocates to the nucleus and binds to DNA as a homodimer and as a heterodimer with NR3C1. Binds the coactivator NCOA2. May interact with HSD11B2 in the absence of ligand. Binds the coactivators NCOA1, TIF1 and NRIP1. Phosphorylated.

Its subcellular location is the cytoplasm. The protein resides in the nucleus. The protein localises to the endoplasmic reticulum membrane. Receptor for both mineralocorticoids (MC) such as aldosterone and glucocorticoids (GC) such as corticosterone or cortisol. Binds to mineralocorticoid response elements (MRE) and transactivates target genes. The effect of MC is to increase ion and water transport and thus raise extracellular fluid volume and blood pressure and lower potassium levels. The polypeptide is Mineralocorticoid receptor (NR3C2) (Aotus nancymaae (Ma's night monkey)).